Consider the following 597-residue polypeptide: Histidine protein kinase DivJ (597 aa).

Transmembrane regions (helical) follow at residues 40–57 (LGWL…LFTA), 62–81 (WPVW…SLIF), 91–109 (WLLV…LTGG), 110–125 (VGGA…VAAA), 137–158 (GAAL…GLAP), and 159–188 (AAPT…LLIG). The 219-residue stretch at 335-553 (NMSHELRTPL…TVSVRLPVLL (219 aa)) folds into the Histidine kinase domain. Histidine 338 carries the post-translational modification Phosphohistidine; by autocatalysis. Residues 561–585 (PTPPAAPEAPSAPEPAPTVEEPPPA) show a composition bias toward pro residues. Residues 561–597 (PTPPAAPEAPSAPEPAPTVEEPPPASLGDNVIAFAPR) are disordered.

The protein resides in the cell membrane. It catalyses the reaction ATP + protein L-histidine = ADP + protein N-phospho-L-histidine.. Kinase required for the regulation of cell division and differentiation. Is part of a signal transduction pathway, activating PleD by phosphorylation. This is Histidine protein kinase DivJ (divJ) from Caulobacter vibrioides (strain ATCC 19089 / CIP 103742 / CB 15) (Caulobacter crescentus).